We begin with the raw amino-acid sequence, 81 residues long: Photosystem I iron-sulfur center (81 aa).

4Fe-4S ferredoxin-type domains are found at residues 2–31 (AHSV…MVPW) and 39–68 (IASA…VRVY). The [4Fe-4S] cluster site is built by Cys11, Cys14, Cys17, Cys21, Cys48, Cys51, Cys54, and Cys58.

In terms of assembly, the eukaryotic PSI reaction center is composed of at least 11 subunits. Requires [4Fe-4S] cluster as cofactor.

It is found in the plastid. The protein resides in the chloroplast thylakoid membrane. The enzyme catalyses reduced [plastocyanin] + hnu + oxidized [2Fe-2S]-[ferredoxin] = oxidized [plastocyanin] + reduced [2Fe-2S]-[ferredoxin]. Functionally, apoprotein for the two 4Fe-4S centers FA and FB of photosystem I (PSI); essential for photochemical activity. FB is the terminal electron acceptor of PSI, donating electrons to ferredoxin. The C-terminus interacts with PsaA/B/D and helps assemble the protein into the PSI complex. Required for binding of PsaD and PsaE to PSI. PSI is a plastocyanin-ferredoxin oxidoreductase, converting photonic excitation into a charge separation, which transfers an electron from the donor P700 chlorophyll pair to the spectroscopically characterized acceptors A0, A1, FX, FA and FB in turn. The sequence is that of Photosystem I iron-sulfur center from Mesostigma viride (Green alga).